The primary structure comprises 334 residues: Ribosomal RNA small subunit methyltransferase H (334 aa).

S-adenosyl-L-methionine-binding positions include 53 to 55, aspartate 72, phenylalanine 99, aspartate 122, and histidine 129; that span reads GGH.

Belongs to the methyltransferase superfamily. RsmH family.

It localises to the cytoplasm. It catalyses the reaction cytidine(1402) in 16S rRNA + S-adenosyl-L-methionine = N(4)-methylcytidine(1402) in 16S rRNA + S-adenosyl-L-homocysteine + H(+). In terms of biological role, specifically methylates the N4 position of cytidine in position 1402 (C1402) of 16S rRNA. This is Ribosomal RNA small subunit methyltransferase H from Leptospira interrogans serogroup Icterohaemorrhagiae serovar Lai (strain 56601).